The chain runs to 453 residues: Ribosomal protein uS12 methylthiotransferase RimO (453 aa).

The MTTase N-terminal domain occupies 5–120 (PKVGFVSLGC…VMQAVHSHLP (116 aa)). Residues cysteine 14, cysteine 50, cysteine 79, cysteine 151, cysteine 155, and cysteine 158 each coordinate [4Fe-4S] cluster. Residues 137–382 (LTPRHYAYLK…MEVAEEVSAR (246 aa)) enclose the Radical SAM core domain. One can recognise a TRAM domain in the interval 385-453 (ARKVGKTLKV…ADGHDLWGEV (69 aa)).

This sequence belongs to the methylthiotransferase family. RimO subfamily. [4Fe-4S] cluster serves as cofactor.

Its subcellular location is the cytoplasm. The enzyme catalyses L-aspartate(89)-[ribosomal protein uS12]-hydrogen + (sulfur carrier)-SH + AH2 + 2 S-adenosyl-L-methionine = 3-methylsulfanyl-L-aspartate(89)-[ribosomal protein uS12]-hydrogen + (sulfur carrier)-H + 5'-deoxyadenosine + L-methionine + A + S-adenosyl-L-homocysteine + 2 H(+). Functionally, catalyzes the methylthiolation of an aspartic acid residue of ribosomal protein uS12. The polypeptide is Ribosomal protein uS12 methylthiotransferase RimO (Burkholderia multivorans (strain ATCC 17616 / 249)).